Here is a 205-residue protein sequence, read N- to C-terminus: Holliday junction branch migration complex subunit RuvA (205 aa).

Residues 1 to 64 (MIGRLRGTLA…EDAHLLYGFA (64 aa)) are domain I. The domain II stretch occupies residues 65-143 (EKRERELFRE…AWETSPAMFT (79 aa)). The tract at residues 144-154 (LVSDGPLPVAS) is flexible linker. Residues 154–205 (SESSAEADAVSALVSLGYKPQEASKAIAAIKDKAGLSSEELIRRSLKGMIAK) are domain III.

This sequence belongs to the RuvA family. As to quaternary structure, homotetramer. Forms an RuvA(8)-RuvB(12)-Holliday junction (HJ) complex. HJ DNA is sandwiched between 2 RuvA tetramers; dsDNA enters through RuvA and exits via RuvB. An RuvB hexamer assembles on each DNA strand where it exits the tetramer. Each RuvB hexamer is contacted by two RuvA subunits (via domain III) on 2 adjacent RuvB subunits; this complex drives branch migration. In the full resolvosome a probable DNA-RuvA(4)-RuvB(12)-RuvC(2) complex forms which resolves the HJ.

It is found in the cytoplasm. Its function is as follows. The RuvA-RuvB-RuvC complex processes Holliday junction (HJ) DNA during genetic recombination and DNA repair, while the RuvA-RuvB complex plays an important role in the rescue of blocked DNA replication forks via replication fork reversal (RFR). RuvA specifically binds to HJ cruciform DNA, conferring on it an open structure. The RuvB hexamer acts as an ATP-dependent pump, pulling dsDNA into and through the RuvAB complex. HJ branch migration allows RuvC to scan DNA until it finds its consensus sequence, where it cleaves and resolves the cruciform DNA. The polypeptide is Holliday junction branch migration complex subunit RuvA (Pseudomonas entomophila (strain L48)).